The chain runs to 394 residues: Phosphopentomutase (394 aa).

Mn(2+) contacts are provided by Asp-13, Asp-286, His-291, Asp-327, His-328, and His-339.

This sequence belongs to the phosphopentomutase family. The cofactor is Mn(2+).

It is found in the cytoplasm. The catalysed reaction is 2-deoxy-alpha-D-ribose 1-phosphate = 2-deoxy-D-ribose 5-phosphate. It catalyses the reaction alpha-D-ribose 1-phosphate = D-ribose 5-phosphate. It functions in the pathway carbohydrate degradation; 2-deoxy-D-ribose 1-phosphate degradation; D-glyceraldehyde 3-phosphate and acetaldehyde from 2-deoxy-alpha-D-ribose 1-phosphate: step 1/2. Its function is as follows. Isomerase that catalyzes the conversion of deoxy-ribose 1-phosphate (dRib-1-P) and ribose 1-phosphate (Rib-1-P) to deoxy-ribose 5-phosphate (dRib-5-P) and ribose 5-phosphate (Rib-5-P), respectively. This Bacillus cereus (strain G9842) protein is Phosphopentomutase.